The chain runs to 217 residues: MARQATFIVALCVCGLAIAGLPRLASAGDLATEQHEGDIGYGVRAYAGVSNYDGDDDAAGNPVDSDVTDDAITDGEWPRVVSGQKPHTTQKGSLIKKLAVPVVGALTSYLVADRVLPELTSAEEEGTESIPGKKRVKTAVGIAALVAAAAFAGLGLARTFRHFVPKKSKTVASEDSALGNSEEQYVEGTVNGSSDPEQERAGGPLIPEGDEQEVDTE.

Residues 1-19 (MARQATFIVALCVCGLAIA) form the signal peptide. The span at 171-183 (VASEDSALGNSEE) shows a compositional bias: polar residues. The segment at 171-217 (VASEDSALGNSEEQYVEGTVNGSSDPEQERAGGPLIPEGDEQEVDTE) is disordered. N191 carries an N-linked (GlcNAc...) asparagine glycan. Residues 208–217 (EGDEQEVDTE) show a composition bias toward acidic residues.

The protein belongs to the Gra7 family.

It localises to the secreted. In Neospora caninum (Coccidian parasite), this protein is Dense granule protein 1 (DG1).